The sequence spans 211 residues: Thiamine-phosphate synthase (211 aa).

4-amino-2-methyl-5-(diphosphooxymethyl)pyrimidine is bound by residues 43-47 (QLRDK) and Asn75. Mg(2+) is bound by residues Asp76 and Asp95. Ser114 is a binding site for 4-amino-2-methyl-5-(diphosphooxymethyl)pyrimidine. 140-142 (TAS) is a binding site for 2-[(2R,5Z)-2-carboxy-4-methylthiazol-5(2H)-ylidene]ethyl phosphate. Lys143 lines the 4-amino-2-methyl-5-(diphosphooxymethyl)pyrimidine pocket. 2-[(2R,5Z)-2-carboxy-4-methylthiazol-5(2H)-ylidene]ethyl phosphate contacts are provided by residues Gly170 and 190–191 (IS).

It belongs to the thiamine-phosphate synthase family. Mg(2+) serves as cofactor.

The enzyme catalyses 2-[(2R,5Z)-2-carboxy-4-methylthiazol-5(2H)-ylidene]ethyl phosphate + 4-amino-2-methyl-5-(diphosphooxymethyl)pyrimidine + 2 H(+) = thiamine phosphate + CO2 + diphosphate. It carries out the reaction 2-(2-carboxy-4-methylthiazol-5-yl)ethyl phosphate + 4-amino-2-methyl-5-(diphosphooxymethyl)pyrimidine + 2 H(+) = thiamine phosphate + CO2 + diphosphate. The catalysed reaction is 4-methyl-5-(2-phosphooxyethyl)-thiazole + 4-amino-2-methyl-5-(diphosphooxymethyl)pyrimidine + H(+) = thiamine phosphate + diphosphate. The protein operates within cofactor biosynthesis; thiamine diphosphate biosynthesis; thiamine phosphate from 4-amino-2-methyl-5-diphosphomethylpyrimidine and 4-methyl-5-(2-phosphoethyl)-thiazole: step 1/1. Its function is as follows. Condenses 4-methyl-5-(beta-hydroxyethyl)thiazole monophosphate (THZ-P) and 2-methyl-4-amino-5-hydroxymethyl pyrimidine pyrophosphate (HMP-PP) to form thiamine monophosphate (TMP). This Coprothermobacter proteolyticus (strain ATCC 35245 / DSM 5265 / OCM 4 / BT) protein is Thiamine-phosphate synthase.